A 539-amino-acid chain; its full sequence is Histone-arginine methyltransferase CARMER (539 aa).

In terms of domain architecture, SAM-dependent MTase PRMT-type spans 149–458; sequence ASQYFQFYGY…QSYDVTIDLH (310 aa). S-adenosyl-L-methionine contacts are provided by Gln162, Arg171, Gly195, Glu217, Glu246, and Thr274. Arg509 is modified (asymmetric dimethylarginine; by autocatalysis).

The protein belongs to the class I-like SAM-binding methyltransferase superfamily. Protein arginine N-methyltransferase family. As to quaternary structure, homodimer. Post-translationally, the dimethylated protein is the major form.

Its subcellular location is the cytoplasm. It localises to the nucleus. It catalyses the reaction L-arginyl-[protein] + 2 S-adenosyl-L-methionine = N(omega),N(omega)-dimethyl-L-arginyl-[protein] + 2 S-adenosyl-L-homocysteine + 2 H(+). Functionally, methylates (mono- and asymmetric dimethylation) the guanidino nitrogens of arginyl residues in proteins. May methylate histone H3 at 'Arg-17' and activate transcription via chromatin remodeling. The protein is Histone-arginine methyltransferase CARMER (Art4) of Drosophila mojavensis (Fruit fly).